The sequence spans 590 residues: V-type ATP synthase alpha chain (590 aa).

An ATP-binding site is contributed by 234–241 (GGFGAGKT).

This sequence belongs to the ATPase alpha/beta chains family.

It carries out the reaction ATP + H2O + 4 H(+)(in) = ADP + phosphate + 5 H(+)(out). Its function is as follows. Produces ATP from ADP in the presence of a proton gradient across the membrane. The V-type alpha chain is a catalytic subunit. The sequence is that of V-type ATP synthase alpha chain from Halothermothrix orenii (strain H 168 / OCM 544 / DSM 9562).